Here is a 317-residue protein sequence, read N- to C-terminus: MPREDRATWKSNYFLKIIQLLDDYPKCFIVGADNVGSKQMQQIRMSLRGKVVVLMGKNTMMRKAIRGHLENNPALEKLLPHIWGNVGFVFTKEDLTEIRDMLLANKVPAAARAGAIAPCEVTVPAQNTGLGPEKTSFFQALGITTKISRGTIEILSDVQLIKTGDKVGASEATLLNMLNISPFSFGLVIQQVFDNGSIYNPEVLDKTEETLHSRFLEGVRNVASVCLQTGYPTVASVPHSIINGYKRVLALSVETDYTFPLAENVKAFLADPSAFVAAAPVAADTTAAPAAAAAPAKVEAKEESEESDEDMGFGLFD.

Tyrosine 24 is subject to Phosphotyrosine. Threonine 59 is modified (phosphothreonine). A disordered region spans residues 292–317 (AAAPAKVEAKEESEESDEDMGFGLFD). A Glycyl lysine isopeptide (Lys-Gly) (interchain with G-Cter in SUMO1); alternate cross-link involves residue lysine 297. A Glycyl lysine isopeptide (Lys-Gly) (interchain with G-Cter in SUMO2); alternate cross-link involves residue lysine 297. Over residues 302–311 (EESEESDEDM) the composition is skewed to acidic residues. Phosphoserine is present on residues serine 304 and serine 307.

The protein belongs to the universal ribosomal protein uL10 family. P0 forms a pentameric complex by interaction with dimers of P1 and P2.

Its function is as follows. Ribosomal protein P0 is the functional equivalent of E.coli protein L10. This chain is Putative ribosomal protein uL10-like (RPLP0P6), found in Homo sapiens (Human).